Consider the following 173-residue polypeptide: Bifunctional protein PyrR (173 aa).

Positions V93–T105 match the PRPP-binding motif.

This sequence belongs to the purine/pyrimidine phosphoribosyltransferase family. PyrR subfamily. In terms of assembly, homodimer and homohexamer; in equilibrium.

The catalysed reaction is UMP + diphosphate = 5-phospho-alpha-D-ribose 1-diphosphate + uracil. Its function is as follows. Regulates transcriptional attenuation of the pyrimidine nucleotide (pyr) operon by binding in a uridine-dependent manner to specific sites on pyr mRNA. This disrupts an antiterminator hairpin in the RNA and favors formation of a downstream transcription terminator, leading to a reduced expression of downstream genes. Functionally, also displays a weak uracil phosphoribosyltransferase activity which is not physiologically significant. In Streptococcus pyogenes serotype M49 (strain NZ131), this protein is Bifunctional protein PyrR.